The chain runs to 945 residues: Valine--tRNA ligase (945 aa).

The 'HIGH' region signature appears at 42 to 52 (PNVTGTLHMGH). The 'KMSKS' region motif lies at 552–556 (KMSKS). Lys-555 provides a ligand contact to ATP. The stretch at 879–945 (DKATETARLS…VQTQLSKLKD (67 aa)) forms a coiled coil.

Belongs to the class-I aminoacyl-tRNA synthetase family. ValS type 1 subfamily. In terms of assembly, monomer.

Its subcellular location is the cytoplasm. The catalysed reaction is tRNA(Val) + L-valine + ATP = L-valyl-tRNA(Val) + AMP + diphosphate. Its function is as follows. Catalyzes the attachment of valine to tRNA(Val). As ValRS can inadvertently accommodate and process structurally similar amino acids such as threonine, to avoid such errors, it has a 'posttransfer' editing activity that hydrolyzes mischarged Thr-tRNA(Val) in a tRNA-dependent manner. This Neisseria meningitidis serogroup A / serotype 4A (strain DSM 15465 / Z2491) protein is Valine--tRNA ligase.